The primary structure comprises 321 residues: Ribose-phosphate pyrophosphokinase 2 (321 aa).

Positions 130, 132, and 145 each coordinate Mg(2+). Serine 172 carries the phosphoserine modification.

It belongs to the ribose-phosphate pyrophosphokinase family.

Its subcellular location is the cytoplasm. It carries out the reaction D-ribose 5-phosphate + ATP = 5-phospho-alpha-D-ribose 1-diphosphate + AMP + H(+). It functions in the pathway metabolic intermediate biosynthesis; 5-phospho-alpha-D-ribose 1-diphosphate biosynthesis; 5-phospho-alpha-D-ribose 1-diphosphate from D-ribose 5-phosphate (route I): step 1/1. Functionally, 5-phosphoribose 1-diphosphate synthase involved in nucleotide, histidine, and tryptophan biosynthesis. Active in heteromultimeric complexes with other 5-phosphoribose 1-diphosphate synthases. The chain is Ribose-phosphate pyrophosphokinase 2 from Schizosaccharomyces pombe (strain 972 / ATCC 24843) (Fission yeast).